Here is a 585-residue protein sequence, read N- to C-terminus: CTP synthase (585 aa).

An amidoligase domain region spans residues 1–281 (MPALRKHPHT…DAYVVRRLNL (281 aa)). Ser-23 contacts CTP. Ser-23 serves as a coordination point for UTP. ATP-binding positions include 24-29 (SLGKGL) and Asp-81. Asp-81 and Glu-155 together coordinate Mg(2+). CTP is bound by residues 162 to 164 (DIE), 202 to 207 (KTKPTQ), and Lys-238. Residues 202–207 (KTKPTQ) and Lys-238 contribute to the UTP site. Residues 306–554 (RIALVGKYID…VGAAVEYNNG (249 aa)) enclose the Glutamine amidotransferase type-1 domain. Gly-369 lines the L-glutamine pocket. Cys-396 serves as the catalytic Nucleophile; for glutamine hydrolysis. L-glutamine contacts are provided by residues 397 to 400 (LGLQ), Glu-419, and Arg-480. Catalysis depends on residues His-527 and Glu-529. The interval 564-585 (IPTADHQSNGAEHALEDAPARG) is disordered. The span at 576–585 (HALEDAPARG) shows a compositional bias: basic and acidic residues.

This sequence belongs to the CTP synthase family. Homotetramer.

The enzyme catalyses UTP + L-glutamine + ATP + H2O = CTP + L-glutamate + ADP + phosphate + 2 H(+). It catalyses the reaction L-glutamine + H2O = L-glutamate + NH4(+). The catalysed reaction is UTP + NH4(+) + ATP = CTP + ADP + phosphate + 2 H(+). It participates in pyrimidine metabolism; CTP biosynthesis via de novo pathway; CTP from UDP: step 2/2. Allosterically activated by GTP, when glutamine is the substrate; GTP has no effect on the reaction when ammonia is the substrate. The allosteric effector GTP functions by stabilizing the protein conformation that binds the tetrahedral intermediate(s) formed during glutamine hydrolysis. Inhibited by the product CTP, via allosteric rather than competitive inhibition. Functionally, catalyzes the ATP-dependent amination of UTP to CTP with either L-glutamine or ammonia as the source of nitrogen. Regulates intracellular CTP levels through interactions with the four ribonucleotide triphosphates. In Mycolicibacterium gilvum (strain PYR-GCK) (Mycobacterium gilvum (strain PYR-GCK)), this protein is CTP synthase.